The sequence spans 160 residues: Transcriptional repressor NrdR (160 aa).

A zinc finger spans residues 3 to 34; the sequence is CPYCQYEDTQVKDSRPVEEGAVIRRRRVCPVC. Positions 49-139 constitute an ATP-cone domain; that stretch reads LLVSKKSGRC…VYRDFRNASD (91 aa).

This sequence belongs to the NrdR family. The cofactor is Zn(2+).

Functionally, negatively regulates transcription of bacterial ribonucleotide reductase nrd genes and operons by binding to NrdR-boxes. The chain is Transcriptional repressor NrdR from Bartonella quintana (strain Toulouse) (Rochalimaea quintana).